The chain runs to 530 residues: Ubiquitin carboxyl-terminal hydrolase 17-like protein 21 (530 aa).

A USP domain is found at 80–375; that stretch reads AGLQNMGNTC…QAYVLFYIQK (296 aa). Cys89 (nucleophile) is an active-site residue. The active-site Proton acceptor is His334. Basic and acidic residues-rich tracts occupy residues 382–392 and 398–412; these read SESVSRGREPR and DTDR…KRDH. Disordered regions lie at residues 382–412 and 477–530; these read SESV…KRDH and NHHP…LVCQ. Over residues 493-505 the composition is skewed to polar residues; sequence TPTHQESMNTGTL. Positions 510-524 are enriched in basic residues; that stretch reads GRARRSKGKNKHSKR.

Belongs to the peptidase C19 family. USP17 subfamily.

The protein resides in the nucleus. Its subcellular location is the endoplasmic reticulum. It carries out the reaction Thiol-dependent hydrolysis of ester, thioester, amide, peptide and isopeptide bonds formed by the C-terminal Gly of ubiquitin (a 76-residue protein attached to proteins as an intracellular targeting signal).. Its function is as follows. Deubiquitinating enzyme that removes conjugated ubiquitin from specific proteins to regulate different cellular processes that may include cell proliferation, progression through the cell cycle, apoptosis, cell migration, and the cellular response to viral infection. The polypeptide is Ubiquitin carboxyl-terminal hydrolase 17-like protein 21 (USP17L21) (Homo sapiens (Human)).